Here is a 91-residue protein sequence, read N- to C-terminus: Insertion element IS1 7 protein InsA (91 aa).

The protein belongs to the IS1 elements InsA family.

In terms of biological role, absolutely required for transposition of IS1. The protein is Insertion element IS1 7 protein InsA (insA7) of Escherichia coli (strain K12).